The chain runs to 155 residues: MSSKLNALFSDSYVDVSQYRDQHFKGNRYEQEKLLKQANTLYVGNLSFYTTEEQVYELFSKSGDVKRIIIGLDKVKKTACGFCFVEYYTRTDAENAMRFVNGTRLDDRIIRTDWDAGFKEGRQYGRGKSGGQVRDEYRQDYDPARGGYGKVVSRP.

Residues Tyr-19, Tyr-42, Arg-111–Asp-115, Arg-122–Arg-126, and Gln-132–Val-133 contribute to the mRNA site. In terms of domain architecture, RRM spans Asn-39–Gly-117. The segment at Arg-122 to Pro-155 is disordered. Residues Val-133–Pro-143 show a composition bias toward basic and acidic residues.

It belongs to the RRM NCBP2 family. Component of the nuclear cap-binding complex (CBC), a heterodimer composed of ncbp1/cbp80 and ncbp2/cbp20 that interacts with m7GpppG-capped RNA.

It localises to the nucleus. The protein localises to the cytoplasm. Functionally, component of the cap-binding complex (CBC), which binds co-transcriptionally to the 5' cap of pre-mRNAs and is involved in various processes such as pre-mRNA splicing, translation regulation, nonsense-mediated mRNA decay, RNA-mediated gene silencing (RNAi) by microRNAs (miRNAs) and mRNA export. The CBC complex is involved in mRNA export from the nucleus, leading to the recruitment of the mRNA export machinery to the 5' end of mRNA and to mRNA export in a 5' to 3' direction through the nuclear pore. The CBC complex is also involved in mediating U snRNA and intronless mRNAs export from the nucleus. The CBC complex is essential for a pioneer round of mRNA translation, before steady state translation when the CBC complex is replaced by cytoplasmic cap-binding protein eIF4E. The pioneer round of mRNA translation mediated by the CBC complex plays a central role in nonsense-mediated mRNA decay (NMD), NMD only taking place in mRNAs bound to the CBC complex, but not on eIF4E-bound mRNAs. The CBC complex enhances NMD in mRNAs containing at least one exon-junction complex (EJC), promoting the interaction between upf1 and upf2. The CBC complex is also involved in 'failsafe' NMD, which is independent of the EJC complex, while it does not participate in Staufen-mediated mRNA decay (SMD). During cell proliferation, the CBC complex is also involved in microRNAs (miRNAs) biogenesis via its interaction with srrt/ars2, thereby being required for miRNA-mediated RNA interference. The CBC complex also acts as a negative regulator of parn, thereby acting as an inhibitor of mRNA deadenylation. In the CBC complex, ncbp2/cbp20 recognizes and binds capped RNAs (m7GpppG-capped RNA) but requires ncbp1/cbp80 to stabilize the movement of its N-terminal loop and lock the CBC into a high affinity cap-binding state with the cap structure. The conventional cap-binding complex with NCBP2 binds both small nuclear RNA (snRNA) and messenger (mRNA) and is involved in their export from the nucleus. This Salmo salar (Atlantic salmon) protein is Nuclear cap-binding protein subunit 2 (ncbp2).